A 595-amino-acid chain; its full sequence is Inactive serine/threonine-protein kinase PLK5 (595 aa).

The 253-residue stretch at 27–279 folds into the Protein kinase domain; the sequence is YRRGKLIGKG…LDHLLQDDFF (253 aa). Residues 33–41 and Lys56 each bind ATP; that span reads IGKGAFSRC. Residue Asp150 is the Proton acceptor of the active site. Residues 326–350 are disordered; sequence FTSKEASGPGEEGTEPDHMEAGNEE. Residues 340–350 are compositionally biased toward basic and acidic residues; that stretch reads EPDHMEAGNEE. POLO box domains lie at 413-491 and 509-595; these read WAPK…YMQR and DISL…LQSV.

This sequence belongs to the protein kinase superfamily. Ser/Thr protein kinase family. CDC5/Polo subfamily. In terms of tissue distribution, expressed in the cerebellum, eye and brain cortex (at protein level). Expressed in highly differentiated tissues, such as brain, eyes and ovary. Not detectable in proliferating tissues, such as the colon, spleen and placenta.

It is found in the nucleus. Its subcellular location is the nucleolus. It localises to the cytoplasm. Its function is as follows. Inactive serine/threonine-protein kinase that plays a role in cell cycle progression and neuronal differentiation. This chain is Inactive serine/threonine-protein kinase PLK5, found in Mus musculus (Mouse).